Reading from the N-terminus, the 221-residue chain is Epididymal secretory glutathione peroxidase (221 aa).

An N-terminal signal peptide occupies residues 1–21 (MVTELRVFYLVPLLLASYVQT). Cys-73 is an active-site residue.

The protein belongs to the glutathione peroxidase family. Epididymis.

It is found in the secreted. It carries out the reaction 2 glutathione + H2O2 = glutathione disulfide + 2 H2O. In terms of biological role, protects cells and enzymes from oxidative damage, by catalyzing the reduction of hydrogen peroxide, lipid peroxides and organic hydroperoxide, by glutathione. May constitute a glutathione peroxidase-like protective system against peroxide damage in sperm membrane lipids. In Mus musculus (Mouse), this protein is Epididymal secretory glutathione peroxidase (Gpx5).